Consider the following 93-residue polypeptide: MTHTLHLVIHGRVQGVGYRAWCADEAVSRGLSGFVRNRREGTVEAVISGPSEAVAAMLEACRSGPAHAHVERIEEALAEAPPAGTGFRVAATV.

The 88-residue stretch at 4-91 (TLHLVIHGRV…PAGTGFRVAA (88 aa)) folds into the Acylphosphatase-like domain. Catalysis depends on residues Arg-19 and Asn-37.

The protein belongs to the acylphosphatase family.

The catalysed reaction is an acyl phosphate + H2O = a carboxylate + phosphate + H(+). The chain is Acylphosphatase (acyP) from Azorhizobium caulinodans (strain ATCC 43989 / DSM 5975 / JCM 20966 / LMG 6465 / NBRC 14845 / NCIMB 13405 / ORS 571).